The chain runs to 372 residues: Cytochrome b (372 aa).

A run of 4 helical transmembrane segments spans residues 25–45, 69–90, 105–125, and 170–190; these read FGSM…FLAV, WMMQ…YIHM, WLSG…GYVL, and FFAL…LHIM. Residues His75 and His89 each contribute to the heme b site. Positions 174 and 188 each coordinate heme b. Residue His193 participates in a ubiquinone binding. A run of 4 helical transmembrane segments spans residues 218–238, 280–300, 312–332, and 339–358; these read YKDL…ISFL, LGGA…PFTH, FMQL…WTAT, and YTTI…MSNL.

The protein belongs to the cytochrome b family. As to quaternary structure, the cytochrome bc1 complex contains 3 respiratory subunits (MT-CYB, CYC1 and UQCRFS1), 2 core proteins (UQCRC1 and UQCRC2) and probably 6 low-molecular weight proteins. The cofactor is heme b.

It is found in the mitochondrion inner membrane. Functionally, component of the ubiquinol-cytochrome c reductase complex (complex III or cytochrome b-c1 complex) that is part of the mitochondrial respiratory chain. The b-c1 complex mediates electron transfer from ubiquinol to cytochrome c. Contributes to the generation of a proton gradient across the mitochondrial membrane that is then used for ATP synthesis. The polypeptide is Cytochrome b (MT-CYB) (Sanzinia madagascariensis (Madagascar tree boa)).